The chain runs to 399 residues: 1-deoxy-D-xylulose 5-phosphate reductoisomerase (399 aa).

Threonine 11, glycine 12, serine 13, isoleucine 14, and asparagine 125 together coordinate NADPH. Residue lysine 126 participates in 1-deoxy-D-xylulose 5-phosphate binding. Residue glutamate 127 coordinates NADPH. Aspartate 151 contributes to the Mn(2+) binding site. The 1-deoxy-D-xylulose 5-phosphate site is built by serine 152, glutamate 153, serine 186, and histidine 209. Glutamate 153 is a Mn(2+) binding site. An NADPH-binding site is contributed by glycine 215. 1-deoxy-D-xylulose 5-phosphate is bound by residues serine 222, asparagine 227, lysine 228, and glutamate 231. Glutamate 231 is a binding site for Mn(2+).

The protein belongs to the DXR family. Mg(2+) is required as a cofactor. Mn(2+) serves as cofactor.

It catalyses the reaction 2-C-methyl-D-erythritol 4-phosphate + NADP(+) = 1-deoxy-D-xylulose 5-phosphate + NADPH + H(+). Its pathway is isoprenoid biosynthesis; isopentenyl diphosphate biosynthesis via DXP pathway; isopentenyl diphosphate from 1-deoxy-D-xylulose 5-phosphate: step 1/6. In terms of biological role, catalyzes the NADPH-dependent rearrangement and reduction of 1-deoxy-D-xylulose-5-phosphate (DXP) to 2-C-methyl-D-erythritol 4-phosphate (MEP). This Acinetobacter baumannii (strain SDF) protein is 1-deoxy-D-xylulose 5-phosphate reductoisomerase.